We begin with the raw amino-acid sequence, 352 residues long: Cellular tumor antigen p53 (352 aa).

The segment at 1 to 48 (MDPVPDLPESQGSFQELWETVSYPPLETLSLPTVNEPTGSWVATGDMF) is transcription activation (acidic). A DNA-binding region spans residues 87–273 (DYPGSYELEL…KTEEESRQKT (187 aa)). C161, H164, C220, and C224 together coordinate Zn(2+). The interaction with DNA stretch occupies residues 254–261 (RICACPGR). Basic and acidic residues predominate over residues 262 to 271 (DRKTEEESRQ). Positions 262–303 (DRKTEEESRQKTQPKKRKVTPNTSSSKRKKSHSSGEEEDNRE) are disordered. Residues 276-291 (KKRKVTPNTSSSKRKK) carry the Bipartite nuclear localization signal motif. Residues 302–331 (REVFHFEVYGRERYEFLKKINDGLELLEKE) form an oligomerization region. A Nuclear export signal motif is present at residues 316-327 (EFLKKINDGLEL). The tract at residues 330 to 352 (KESKSKNKDSGMVPSSGKKLKSN) is disordered. Positions 334-350 (SKNKDSGMVPSSGKKLK) are basic (repression of DNA-binding). At S351 the chain carries Phosphoserine.

This sequence belongs to the p53 family. As to quaternary structure, binds DNA as a homotetramer. It depends on Zn(2+) as a cofactor.

It is found in the cytoplasm. Its subcellular location is the nucleus. In terms of biological role, multifunctional transcription factor that induces cell cycle arrest, DNA repair or apoptosis upon binding to its target DNA sequence. Acts as a tumor suppressor in many tumor types; induces growth arrest or apoptosis depending on the physiological circumstances and cell type. Negatively regulates cell division by controlling expression of a set of genes required for this process. One of the activated genes is an inhibitor of cyclin-dependent kinases. Apoptosis induction seems to be mediated either by stimulation of BAX and FAS antigen expression, or by repression of Bcl-2 expression. In Oryzias latipes (Japanese rice fish), this protein is Cellular tumor antigen p53 (tp53).